A 137-amino-acid chain; its full sequence is Small ribosomal subunit protein uS9 (137 aa).

The interval 103-137 (PPLKAEGYLTRDPRAKERKKYGLHKARKAPQYSKR) is disordered. The span at 118-137 (KERKKYGLHKARKAPQYSKR) shows a compositional bias: basic residues.

Belongs to the universal ribosomal protein uS9 family.

In Crocosphaera subtropica (strain ATCC 51142 / BH68) (Cyanothece sp. (strain ATCC 51142)), this protein is Small ribosomal subunit protein uS9.